Reading from the N-terminus, the 1377-residue chain is DNA-directed RNA polymerase subunit beta'' (1377 aa).

Residues cysteine 224, cysteine 294, cysteine 301, and cysteine 304 each contribute to the Zn(2+) site.

This sequence belongs to the RNA polymerase beta' chain family. RpoC2 subfamily. In plastids the minimal PEP RNA polymerase catalytic core is composed of four subunits: alpha, beta, beta', and beta''. When a (nuclear-encoded) sigma factor is associated with the core the holoenzyme is formed, which can initiate transcription. Zn(2+) is required as a cofactor.

It is found in the plastid. The protein localises to the chloroplast. The catalysed reaction is RNA(n) + a ribonucleoside 5'-triphosphate = RNA(n+1) + diphosphate. Functionally, DNA-dependent RNA polymerase catalyzes the transcription of DNA into RNA using the four ribonucleoside triphosphates as substrates. The chain is DNA-directed RNA polymerase subunit beta'' from Calycanthus floridus var. glaucus (Eastern sweetshrub).